We begin with the raw amino-acid sequence, 305 residues long: Ribosomal RNA large subunit methyltransferase F (305 aa).

It belongs to the methyltransferase superfamily. METTL16/RlmF family.

Its subcellular location is the cytoplasm. The catalysed reaction is adenosine(1618) in 23S rRNA + S-adenosyl-L-methionine = N(6)-methyladenosine(1618) in 23S rRNA + S-adenosyl-L-homocysteine + H(+). In terms of biological role, specifically methylates the adenine in position 1618 of 23S rRNA. This Enterobacter sp. (strain 638) protein is Ribosomal RNA large subunit methyltransferase F.